Here is a 358-residue protein sequence, read N- to C-terminus: Flap endonuclease 1 (358 aa).

Positions 1 to 103 (MGIKRLSKLI…HEFEKRTKRR (103 aa)) are N-domain. Asp-34 provides a ligand contact to Mg(2+). Residues Arg-47 and Arg-69 each contribute to the DNA site. Mg(2+) contacts are provided by Asp-85, Glu-157, Glu-159, Asp-178, and Asp-180. The segment at 121 to 252 (LVSKYDRMNV…KRAFEYIKKY (132 aa)) is I-domain. A DNA-binding site is contributed by Glu-157. The DNA site is built by Gly-230 and Asp-232. Asp-232 is a binding site for Mg(2+). The tract at residues 346–354 (KQTRIDSFF) is interaction with PCNA.

The protein belongs to the XPG/RAD2 endonuclease family. FEN1 subfamily. As to quaternary structure, interacts with PCNA. Three molecules of FEN1 bind to one PCNA trimer with each molecule binding to one PCNA monomer. PCNA stimulates the nuclease activity without altering cleavage specificity. The cofactor is Mg(2+). In terms of processing, phosphorylated. Phosphorylation upon DNA damage induces relocalization to the nuclear plasma.

The protein resides in the nucleus. It is found in the nucleolus. It localises to the nucleoplasm. The protein localises to the mitochondrion. Its function is as follows. Structure-specific nuclease with 5'-flap endonuclease and 5'-3' exonuclease activities involved in DNA replication and repair. During DNA replication, cleaves the 5'-overhanging flap structure that is generated by displacement synthesis when DNA polymerase encounters the 5'-end of a downstream Okazaki fragment. It enters the flap from the 5'-end and then tracks to cleave the flap base, leaving a nick for ligation. Also involved in the long patch base excision repair (LP-BER) pathway, by cleaving within the apurinic/apyrimidinic (AP) site-terminated flap. Acts as a genome stabilization factor that prevents flaps from equilibrating into structures that lead to duplications and deletions. Also possesses 5'-3' exonuclease activity on nicked or gapped double-stranded DNA, and exhibits RNase H activity. Also involved in replication and repair of rDNA and in repairing mitochondrial DNA. The polypeptide is Flap endonuclease 1 (Enterocytozoon bieneusi (strain H348) (Microsporidian parasite)).